The primary structure comprises 180 residues: uncharacterized protein (180 aa).

Residues 1–93 are disordered; the sequence is MPSSVPKTSI…LPRRRNPGWV (93 aa). 2 stretches are compositionally biased toward low complexity: residues 9 to 25 and 47 to 64; these read SIESLGSPSSLSSSQAS and LTSSTESLGYLSSLSSSQ.

This is an uncharacterized protein from Homo sapiens (Human).